Here is a 412-residue protein sequence, read N- to C-terminus: Argininosuccinate synthase (412 aa).

Residues alanine 15–serine 23 and alanine 42 contribute to the ATP site. Residues tyrosine 93 and serine 98 each coordinate L-citrulline. Glycine 123 is an ATP binding site. L-aspartate-binding residues include threonine 125, asparagine 129, and aspartate 130. Asparagine 129 is an L-citrulline binding site. Residues arginine 133, serine 185, serine 194, glutamate 270, and tyrosine 282 each contribute to the L-citrulline site.

The protein belongs to the argininosuccinate synthase family. Type 1 subfamily. Homotetramer.

The protein resides in the cytoplasm. It carries out the reaction L-citrulline + L-aspartate + ATP = 2-(N(omega)-L-arginino)succinate + AMP + diphosphate + H(+). It functions in the pathway amino-acid biosynthesis; L-arginine biosynthesis; L-arginine from L-ornithine and carbamoyl phosphate: step 2/3. The chain is Argininosuccinate synthase from Psychrobacter cryohalolentis (strain ATCC BAA-1226 / DSM 17306 / VKM B-2378 / K5).